Reading from the N-terminus, the 662-residue chain is Polyunsaturated fatty acid (12S)/(13S)-lipoxygenase, epidermal-type (662 aa).

In terms of domain architecture, PLAT spans 2–114 (VKYKILVATG…TICLTEGTAL (113 aa)). In terms of domain architecture, Lipoxygenase spans 115-662 (KVTDDTQNLF…PSLVENSVTI (548 aa)). Positions 360, 365, 540, and 662 each coordinate Fe cation.

The protein belongs to the lipoxygenase family. The cofactor is Fe cation. Expressed in epidermis.

It is found in the cytoplasm. It carries out the reaction (5Z,8Z,11Z,14Z)-eicosatetraenoate + O2 = (12S)-hydroperoxy-(5Z,8Z,10E,14Z)-eicosatetraenoate. The catalysed reaction is 1-O-methyl-(9Z,12Z)-octadecadienoate + O2 = 1-O-methyl-(13S)-hydroperoxy-(9Z,11E)-octadecadienoate. The enzyme catalyses (8Z,11Z,14Z)-eicosatrienoate + O2 = (12S)-hydroperoxy-(8Z,10E,14Z)-eicosatrienoate. It catalyses the reaction (5Z,8Z,11Z)-eicosatrienoate + O2 = (12S)-hydroperoxy-(5Z,8Z,10E)-eicosatrienoate. It carries out the reaction 1-O-methyl-(5Z,8Z,11Z,14Z)-eicosatetraenoate + O2 = 1-O-methyl-(12S)-hydroperoxy-(5Z,8Z,10E,14Z)-eicosatetraenoate. The catalysed reaction is (9Z,12Z)-octadecadienoate + O2 = (13S)-hydroperoxy-(9Z,11E)-octadecadienoate. The enzyme catalyses (4Z,7Z,10Z,13Z,16Z,19Z)-docosahexaenoate + O2 = (14S)-hydroperoxy-(4Z,7Z,10Z,12E,16Z,19Z)-docosahexaenoate. Its pathway is lipid metabolism; hydroperoxy eicosatetraenoic acid biosynthesis. Its activity is regulated as follows. Arachidonate 12-lipoxygenase activity is decreased when the pH decreases from 7.4 to 6.0. In terms of biological role, catalyzes the regio and stereo-specific incorporation of a single molecule of dioxygen into free and esterified polyunsaturated fatty acids generating lipid hydroperoxides that can be further reduced to the corresponding hydroxy species. Shows increasing catalytic activity within the series arachidonic acid &lt; 5,8,11-eicosatrienoic acid &lt; linoleic acid &lt; 8,11,14-eicosatrienoic acid. The sequence is that of Polyunsaturated fatty acid (12S)/(13S)-lipoxygenase, epidermal-type from Mus musculus (Mouse).